The primary structure comprises 703 residues: Probable boron transporter 2 (703 aa).

Residues 1–35 lie on the Cytoplasmic side of the membrane; that stretch reads MEETFVPFEGIKNDLKGRLMCYKQDWTGGIKAGFR. The helical transmembrane segment at 36 to 56 threads the bilayer; that stretch reads ILAPTTYIFFASAIPVISFGE. Residues 57-75 lie on the Extracellular side of the membrane; the sequence is QLERSTDGVLTAVQTLAST. The chain crosses the membrane as a helical span at residues 76-96; sequence AICGIIHSIIGGQPLLILGVA. Topologically, residues 97 to 120 are cytoplasmic; the sequence is EPTVIMYTFMFNFAKGRPELGRNL. The helical transmembrane segment at 121–141 threads the bilayer; that stretch reads FLAWSGWVCVWTSLILFVLAI. Over 142–155 the chain is Extracellular; sequence CGACSFINRFTRVA. A helical transmembrane segment spans residues 156 to 176; that stretch reads GELFGLLIAMLFMQQAIKGLV. Residues 177 to 195 lie on the Cytoplasmic side of the membrane; sequence DEFRAPAREDLKLVEFLPS. Residues 196–216 traverse the membrane as a helical segment; it reads WRFANGMFALVLSFGLLITAL. At 217–233 the chain is on the extracellular side; it reads RSRKARSWRYGTGWLRS. A helical membrane pass occupies residues 234 to 254; it reads LVADYGVPLMVLVWTGVSYIP. Residues 255–289 are Cytoplasmic-facing; sequence TGDVPKGIPRRLFSPNPWSPGAYENWTVVKEMLQV. The chain crosses the membrane as a helical span at residues 290 to 310; the sequence is PIVYIIGAFIPATMIAVLYYF. The Extracellular segment spans residues 311–337; the sequence is DHSVASQLAQQKEFNLRKPSSYHYDLL. A helical membrane pass occupies residues 338-358; it reads LLGFLTLMCGLLGIPPSNGVI. The Cytoplasmic segment spans residues 359 to 480; sequence PQSPMHTKSL…AVMVGGCVAA (122 aa). A helical transmembrane segment spans residues 481–501; the sequence is MPLLKMIPTSVLWGYFAFMAI. Residues 502-557 are Extracellular-facing; the sequence is ESLPGNQFWERILLLFTAPSRRFKVLEDNHATFVETVPFKTIAMFTIFQTTYLLTC. Residues 558–578 traverse the membrane as a helical segment; it reads FGLTWIPIAGVMFPLLIMFLI. The Cytoplasmic segment spans residues 579 to 703; the sequence is PVRQYILPRF…SPLNPSSSSK (125 aa). The interval 678-703 is disordered; the sequence is EMSPRLSGKGQNSPKPSPLNPSSSSK.

This sequence belongs to the anion exchanger (TC 2.A.31.3) family.

It localises to the membrane. Its function is as follows. Probable boron transporter. Boron is essential for maintaining the integrity of plants cell walls. This Arabidopsis thaliana (Mouse-ear cress) protein is Probable boron transporter 2 (BOR2).